Reading from the N-terminus, the 714-residue chain is ATP-dependent zinc metalloprotease FtsH (714 aa).

Over 1–75 (MEKPRRLRPR…KNPMEPRQQQ (75 aa)) the chain is Cytoplasmic. The chain crosses the membrane as a helical span at residues 76–96 (FSLWYVLVTILAMLAIQTLFV). Residues 97 to 188 (SGHVETIPYS…FVGQPDNKWL (92 aa)) lie on the Periplasmic side of the membrane. A helical transmembrane segment spans residues 189–209 (STILSWVVPAVIFFGIWSFLI). At 210-714 (KRVGGAAGSM…GKPDQKTQGT (505 aa)) the chain is on the cytoplasmic side. 280 to 287 (GAPGTGKT) lines the ATP pocket. H502 is a binding site for Zn(2+). E503 is an active-site residue. Residues H506 and D579 each contribute to the Zn(2+) site. A disordered region spans residues 688–714 (PMPPPKPVANIEESTATGKPDQKTQGT). The segment covering 699-714 (EESTATGKPDQKTQGT) has biased composition (polar residues).

The protein in the central section; belongs to the AAA ATPase family. This sequence in the C-terminal section; belongs to the peptidase M41 family. In terms of assembly, homohexamer. It depends on Zn(2+) as a cofactor.

It localises to the cell inner membrane. In terms of biological role, acts as a processive, ATP-dependent zinc metallopeptidase for both cytoplasmic and membrane proteins. Plays a role in the quality control of integral membrane proteins. This is ATP-dependent zinc metalloprotease FtsH from Ralstonia pickettii (strain 12J).